The chain runs to 971 residues: MVLWNLFVFATSVILLAEGTFDNCNNGLLTDKILKITSPHGNVSVWDINEVIVFGEQESGKLSLILPKQFSIKLEKVDRTFLNVFVLKPIRDDYFHNVVIEYIVSKEWHPSLQFDLQSIHLKIVDDRSGQSKDLILLYDLRAEGQQTSKILLAPNKRDPKCQRPAVMDTIHYSQVFVQNAMRNRSHVSSGSRCTIAFLLNTNGDFENYVTSKNDEIRILNYTKIINANEYAYILVEFETLKPGKAEFNVVQKQISNKKTREFYGVPITIVPGFIDFWKSSEFSNENLNPNEQISIFKTFLYDPTENKALSFDGNEEVININRPSTNYSELVFVFKTENKHFFQFAMQSQETGIFYRIFKHDSNTIITIPFDGIRNELSEENLRLAYCYDTMDFYNVKITTDGVQNSNNIVQMKKKSTNSAIESIWKLIPHRFDYYDVTDMIYYEEHDHGLLRFDVGENMITEVKKTYFKTTLRETLVDKYPILNFGEQFPYTNTSVDIIISNNNSKVIETASVQINGYKSGSYIRRIGNPVYYDYIFINYFNSSEYWNVDESVGGIYMIFLNDPFRKKSIGFKPDENNNFDIQRPSTDYSDLVVISVNKTTKNCDPAITVRSLETGLIYEHAQYFNPMVFSIRFDGIRNELPVEHLSIERFDTVYHVKITNKHVSIGYTSEVNSVFNGVWEKQENACTAVAEVGVHKYYINGETIILEEKQSGSLIFDVPKNAIVTILISSSKCSDLDVNREFANKFSYQVLENVCPDSKGYFDITVIVKDSNINQNFRVHYQIGSRTFERPQTTSPTYIPVTTSYPPTTNPPSPALPNLIDFLNKERENVNFKYDSTELAMICSYEIFENGTTTITRVLPVNGTYTIAKYLGAKTTGIAFFINKSDKTEAYRLTEKSITMGFENSVTSENHEGNEWIVTSEFQGERKNLKEESLIATLENLNSKRKTEVNVQVKAYFKSFLDAKFKKLSS.

This is an uncharacterized protein from Caenorhabditis elegans.